A 159-amino-acid polypeptide reads, in one-letter code: Ribose-5-phosphate isomerase B (159 aa).

D-ribulose 5-phosphate-binding positions include 8–9 and 67–71; these read DH and GSGNG. The active-site Proton acceptor is glutamate 72. The active-site Proton donor is the histidine 99. Residues asparagine 100, arginine 110, arginine 134, and arginine 138 each coordinate D-ribulose 5-phosphate.

It belongs to the LacAB/RpiB family. Homodimer.

The catalysed reaction is aldehydo-D-ribose 5-phosphate = D-ribulose 5-phosphate. It participates in carbohydrate degradation; pentose phosphate pathway; D-ribose 5-phosphate from D-ribulose 5-phosphate (non-oxidative stage): step 1/1. Catalyzes the interconversion of ribulose-5-P and ribose-5-P. The sequence is that of Ribose-5-phosphate isomerase B from Mycolicibacterium paratuberculosis (strain ATCC BAA-968 / K-10) (Mycobacterium paratuberculosis).